The sequence spans 173 residues: Large ribosomal subunit protein uL15 (173 aa).

The segment covering 1-11 (MKLNEIRDNQG) has biased composition (basic and acidic residues). Residues 1-50 (MKLNEIRDNQGARKSRVRVGRGIGSGLGKTGGRGQKGQKSRSGVSINGFE) form a disordered region. The segment covering 21–35 (RGIGSGLGKTGGRGQ) has biased composition (gly residues).

This sequence belongs to the universal ribosomal protein uL15 family. As to quaternary structure, part of the 50S ribosomal subunit.

Functionally, binds to the 23S rRNA. The sequence is that of Large ribosomal subunit protein uL15 from Rhizorhabdus wittichii (strain DSM 6014 / CCUG 31198 / JCM 15750 / NBRC 105917 / EY 4224 / RW1) (Sphingomonas wittichii).